Here is a 305-residue protein sequence, read N- to C-terminus: Putative lipid kinase SAS0691 (305 aa).

The DAGKc domain occupies 3–139 (NKYTHGVLFY…YDVIKINNQY (137 aa)). Residues serine 44, 74–80 (GDGTVNE), and threonine 101 each bind ATP. Mg(2+) contacts are provided by serine 220, aspartate 223, and glutamate 225. Glutamate 281 (proton acceptor) is an active-site residue.

It belongs to the diacylglycerol/lipid kinase family. Requires Mg(2+) as cofactor.

May catalyze the ATP-dependent phosphorylation of lipids other than diacylglycerol (DAG). The sequence is that of Putative lipid kinase SAS0691 from Staphylococcus aureus (strain MSSA476).